A 350-amino-acid polypeptide reads, in one-letter code: Glyceraldehyde-3-phosphate dehydrogenase (350 aa).

Residues threonine 13–isoleucine 14 and glycine 118 each bind NAD(+). D-glyceraldehyde 3-phosphate is bound at residue serine 147–asparagine 149. The active-site Nucleophile is cysteine 148. Arginine 176 provides a ligand contact to NAD(+). Histidine 202–glycine 203 lines the D-glyceraldehyde 3-phosphate pocket. Glutamine 309 is an NAD(+) binding site. The segment at leucine 327 to leucine 350 is disordered.

This sequence belongs to the glyceraldehyde-3-phosphate dehydrogenase family. Homotetramer.

It localises to the cytoplasm. It carries out the reaction D-glyceraldehyde 3-phosphate + phosphate + NADP(+) = (2R)-3-phospho-glyceroyl phosphate + NADPH + H(+). The catalysed reaction is D-glyceraldehyde 3-phosphate + phosphate + NAD(+) = (2R)-3-phospho-glyceroyl phosphate + NADH + H(+). It functions in the pathway carbohydrate degradation; glycolysis; pyruvate from D-glyceraldehyde 3-phosphate: step 1/5. In Methanopyrus kandleri (strain AV19 / DSM 6324 / JCM 9639 / NBRC 100938), this protein is Glyceraldehyde-3-phosphate dehydrogenase.